Here is a 286-residue protein sequence, read N- to C-terminus: Flagellar filament 33 kDa core protein (286 aa).

The protein belongs to the bacterial flagellin family. In terms of assembly, the flagellum consists of an outer layer composed of repeating units of FlaA around a core that contains several antigenically related polypeptides.

The protein localises to the periplasmic flagellum. The protein resides in the periplasm. Functionally, component of the core of the flagella. The chain is Flagellar filament 33 kDa core protein from Treponema phagedenis.